The primary structure comprises 501 residues: Pyruvate kinase 1 (501 aa).

Arg50 contacts substrate. Residues Asn52, Ser54, Asp85, and Thr86 each contribute to the K(+) site. 52 to 55 (NFSH) is an ATP binding site. Residues Arg92 and Lys178 each contribute to the ATP site. Glu243 contacts Mg(2+). Residues Gly266, Asp267, and Thr299 each contribute to the substrate site. Asp267 is a binding site for Mg(2+).

It belongs to the pyruvate kinase family. As to quaternary structure, homotetramer. Mg(2+) is required as a cofactor. It depends on K(+) as a cofactor.

It catalyses the reaction pyruvate + ATP = phosphoenolpyruvate + ADP + H(+). It functions in the pathway carbohydrate degradation; glycolysis; pyruvate from D-glyceraldehyde 3-phosphate: step 5/5. The polypeptide is Pyruvate kinase 1 (PYK1) (Candida glabrata (strain ATCC 2001 / BCRC 20586 / JCM 3761 / NBRC 0622 / NRRL Y-65 / CBS 138) (Yeast)).